Here is a 345-residue protein sequence, read N- to C-terminus: Protein GAMETE CELL DEFECTIVE 1, mitochondrial (345 aa).

A mitochondrion-targeting transit peptide spans 1–43 (MLALRKTLLHGRLPAAPPAAAAAAIASRIPALLRRLSSSPGDG). The interval 36–81 (LSSSPGDGQGGDEWGSSWSTGITKEHFDGSDAAVGRPVTSPSKPVS) is disordered.

Expressed in roots, stems, leaves and florets.

It localises to the mitochondrion. Its function is as follows. Essential for fertility (male and female gametophyte functions and development). Required for the integrity of female gametic mitochondria. Involved in embryo apical-basal patterning, and particularly dorsal-ventral patterning, during early embryogenesis, and endosperm free nucleus positioning and development as well as early endosperm development, probably by modulating the expression pattern of related genes (e.g. AL1, MYB3/AL2, CYP78A13/GE, PNH1, HAZ1, MPK6 and OSH1). Has function in triggering of endosperm programmed cell death (PCD) leading to syncytial endosperm cellularization and starchy endosperm cell maturation. Implicated in central vacuole dynamics necessary for microspore development leading to pollen production, and for pollen development and germination. This Oryza sativa subsp. japonica (Rice) protein is Protein GAMETE CELL DEFECTIVE 1, mitochondrial.